Consider the following 457-residue polypeptide: tRNA-2-methylthio-N(6)-dimethylallyladenosine synthase (457 aa).

The region spanning 3–120 (KKVYVKTFGC…LPQMIDARRE (118 aa)) is the MTTase N-terminal domain. Positions 12, 49, 83, 157, 161, and 164 each coordinate [4Fe-4S] cluster. The Radical SAM core domain maps to 143–377 (RVEGPSAFVS…QATIEENVAR (235 aa)). The TRAM domain maps to 380–447 (QSMLGKVERI…PHSLRGELVL (68 aa)).

It belongs to the methylthiotransferase family. MiaB subfamily. Monomer. [4Fe-4S] cluster serves as cofactor.

The protein resides in the cytoplasm. The catalysed reaction is N(6)-dimethylallyladenosine(37) in tRNA + (sulfur carrier)-SH + AH2 + 2 S-adenosyl-L-methionine = 2-methylsulfanyl-N(6)-dimethylallyladenosine(37) in tRNA + (sulfur carrier)-H + 5'-deoxyadenosine + L-methionine + A + S-adenosyl-L-homocysteine + 2 H(+). Its function is as follows. Catalyzes the methylthiolation of N6-(dimethylallyl)adenosine (i(6)A), leading to the formation of 2-methylthio-N6-(dimethylallyl)adenosine (ms(2)i(6)A) at position 37 in tRNAs that read codons beginning with uridine. The polypeptide is tRNA-2-methylthio-N(6)-dimethylallyladenosine synthase (Burkholderia mallei (strain NCTC 10247)).